Reading from the N-terminus, the 123-residue chain is Keratin-associated protein 2-2 (123 aa).

The 11 X 5 AA repeats of C-C-[CDPQRWG]-[APRS]-[CIPSTVD] stretch occupies residues 5 to 112; it reads CCGSTFSSLS…SVQSPCGQPT (108 aa).

The protein belongs to the KRTAP type 2 family. As to quaternary structure, interacts with hair keratins.

In the hair cortex, hair keratin intermediate filaments are embedded in an interfilamentous matrix, consisting of hair keratin-associated proteins (KRTAP), which are essential for the formation of a rigid and resistant hair shaft through their extensive disulfide bond cross-linking with abundant cysteine residues of hair keratins. The matrix proteins include the high-sulfur and high-glycine-tyrosine keratins. In Homo sapiens (Human), this protein is Keratin-associated protein 2-2 (KRTAP2-2).